Reading from the N-terminus, the 253-residue chain is RNA polymerase sigma factor SigI6 (253 aa).

The Polymerase core binding motif lies at 63–76 (EEYSVALLAFNEAI). Residues 203-222 (TLELLKLAKVSRRTIERNKK) constitute a DNA-binding region (H-T-H motif).

It belongs to the sigma-70 factor family. SigI subfamily. As to quaternary structure, interacts with RsgI6.

It is found in the cytoplasm. Negatively regulated by the anti-sigma-I factor RsgI6. Binding of the polysaccharide substrate to RsgI6 may lead to the release and activation of SigI6. Functionally, sigma factors are initiation factors that promote the attachment of RNA polymerase to specific initiation sites and are then released. This sigma factor is involved in regulation of cellulosomal genes via an external polysaccharide-sensing mechanism. Recognizes the predicted promoters associated with sigI6 itself, xyn11B, xyn10D, xyn10Z, xyn10Y, cel9V, cseP, sigI1, cipA, and rsgI5. The chain is RNA polymerase sigma factor SigI6 from Acetivibrio thermocellus (strain ATCC 27405 / DSM 1237 / JCM 9322 / NBRC 103400 / NCIMB 10682 / NRRL B-4536 / VPI 7372) (Clostridium thermocellum).